A 607-amino-acid polypeptide reads, in one-letter code: MAKVVGIDLGTTNSVIAVMEGGQPTVVPNSEGFRTTPSVVAYTKNGDLLVGQIAKRQAVINPGNTFYSVKRFIGRKFSEIEQEAKQVPYPVQADGKGNVRIFCSAKDKFFAPEEISAQVLRKLVDSASQYLGEKVTQAVITVPAYFNDSQRQATKDAGKIAGLDVLRIINEPTAASLAYGLDKKSNEKILVFDLGGGTFDVSILEIGDGVFEVLATSGDTHLGGDDFDKKIVDWLIDNWKRIEGIDLSKDKQALQRLTEAAEKAKIELSNVTQTDINLPFITATADGPKHLDQTLTRAQFEQLTSDLIERCRKPVEQALTDAKLSKQDIDEVVLVGGSTRIPAVQQLVKDLLGKQPNQSVNPDEVVAIGAAIQAGVLAGEVKNILLLDVCPLSLGVETLGGIMTKMIPRNTTIPTRKTEIYSTAVDNQTNVEIHVLQGERELAKDNKSLGTFRLDGIPPAPRGVPQIEVTFDIDANGILSVTAKERSTGKQQSITITGASTLDQSEIERMVKEAEKNAEEDRKKREQIETKNLAESVYYQAEKMGLKDNAQELKNAIDQLDYEGMKNLTQQVQTLIAQKASETSNAKTNGKASEKEDVIDADFKAQE.

A compositionally biased stretch (polar residues) spans 579–591 (KASETSNAKTNGK). The interval 579–607 (KASETSNAKTNGKASEKEDVIDADFKAQE) is disordered. Positions 592–607 (ASEKEDVIDADFKAQE) are enriched in basic and acidic residues.

The protein belongs to the heat shock protein 70 family.

It is found in the plastid. It localises to the chloroplast. Functionally, acts as a chaperone. This Cyanidioschyzon merolae (strain NIES-3377 / 10D) (Unicellular red alga) protein is Chaperone protein dnaK.